The primary structure comprises 546 residues: CTP synthase (546 aa).

The tract at residues 1-266 (MTTRYIFVTG…DDLVVKRFGL (266 aa)) is amidoligase domain. Residue S14 coordinates CTP. A UTP-binding site is contributed by S14. ATP-binding positions include 15–20 (SLGKGI) and D72. Mg(2+)-binding residues include D72 and E140. CTP is bound by residues 147 to 149 (DIE), 187 to 192 (KTKPTQ), and K223. Residues 187–192 (KTKPTQ) and K223 contribute to the UTP site. ATP is bound at residue 239-241 (KDV). The Glutamine amidotransferase type-1 domain maps to 291–542 (VIGMVGKYIE…VAAASAHQKR (252 aa)). L-glutamine is bound at residue G352. The Nucleophile; for glutamine hydrolysis role is filled by C379. L-glutamine contacts are provided by residues 380–383 (LGMQ), E403, and R470. Catalysis depends on residues H515 and E517.

This sequence belongs to the CTP synthase family. In terms of assembly, homotetramer.

It catalyses the reaction UTP + L-glutamine + ATP + H2O = CTP + L-glutamate + ADP + phosphate + 2 H(+). It carries out the reaction L-glutamine + H2O = L-glutamate + NH4(+). The catalysed reaction is UTP + NH4(+) + ATP = CTP + ADP + phosphate + 2 H(+). It participates in pyrimidine metabolism; CTP biosynthesis via de novo pathway; CTP from UDP: step 2/2. With respect to regulation, allosterically activated by GTP, when glutamine is the substrate; GTP has no effect on the reaction when ammonia is the substrate. The allosteric effector GTP functions by stabilizing the protein conformation that binds the tetrahedral intermediate(s) formed during glutamine hydrolysis. Inhibited by the product CTP, via allosteric rather than competitive inhibition. Its function is as follows. Catalyzes the ATP-dependent amination of UTP to CTP with either L-glutamine or ammonia as the source of nitrogen. Regulates intracellular CTP levels through interactions with the four ribonucleotide triphosphates. The chain is CTP synthase from Shewanella sp. (strain MR-4).